Reading from the N-terminus, the 197-residue chain is Imidazoleglycerol-phosphate dehydratase (197 aa).

The protein belongs to the imidazoleglycerol-phosphate dehydratase family.

The protein localises to the cytoplasm. The enzyme catalyses D-erythro-1-(imidazol-4-yl)glycerol 3-phosphate = 3-(imidazol-4-yl)-2-oxopropyl phosphate + H2O. The protein operates within amino-acid biosynthesis; L-histidine biosynthesis; L-histidine from 5-phospho-alpha-D-ribose 1-diphosphate: step 6/9. The polypeptide is Imidazoleglycerol-phosphate dehydratase (Rhodopseudomonas palustris (strain HaA2)).